We begin with the raw amino-acid sequence, 445 residues long: Clusterin (445 aa).

A signal peptide spans 1 to 22; it reads MMKTLLLLVGLLLTWDNGRVLG. The Nuclear localization signal motif lies at 78-81; sequence KKKK. Residues N86 and N103 are each glycosylated (N-linked (GlcNAc...) asparagine). 5 disulfide bridges follow: C102/C309, C113/C301, C116/C298, C121/C291, and C129/C281. S133 carries the phosphoserine modification. N145, N277, N287, N350, and N370 each carry an N-linked (GlcNAc...) asparagine glycan. A Phosphoserine modification is found at S392. Positions 439–443 match the Nuclear localization signal motif; the sequence is RQKHR.

Belongs to the clusterin family. As to quaternary structure, antiparallel disulfide-linked heterodimer of an alpha chain and a beta chain. Self-associates and forms higher oligomers. Interacts with a broad range of misfolded proteins, including APP, APOC2 and LYZ. Slightly acidic pH promotes interaction with misfolded proteins. Forms high-molecular weight oligomers upon interaction with misfolded proteins. Interacts with APOA1, LRP2, CLUAP1 and PON1. Interacts with the complement membrane attack complex. Interacts (via alpha chain) with XRCC6. Interacts with SYVN1, COMMD1, BTRC, CUL1 and with ubiquitin and SCF (SKP1-CUL1-F-box protein) E3 ubiquitin-protein ligase complexes. Interacts (via alpha chain) with BAX in stressed cells, where BAX undergoes a conformation change leading to association with the mitochondrial membrane. Does not interact with BAX in unstressed cells. Found in a complex with LTF, CLU, EPPIN and SEMG1. Interacts (immaturely glycosylated pre-secreted form) with HSPA5; this interaction promotes CLU stability and facilitates stress-induced CLU retrotranslocation from the secretory pathway to the mitochondria, thereby reducing stress-induced apoptosis by stabilizing mitochondrial membrane integrity. Interacts with BCL2L1; this interaction releases and activates BAX and promotes cell death. Interacts with TGFBR2 and ACVR1. Interacts (secreted form) with STMN3; this interaction may act as an important modulator during neuronal differentiation. Interacts with VLDLR and LRP8. Proteolytically cleaved on its way through the secretory system, probably within the Golgi lumen. Proteolytic cleavage is not necessary for its chaperone activity. All non-secreted forms are not proteolytically cleaved. Chaperone activity of uncleaved forms is dependent on a non-reducing environment. This proteolytic maturation is disulfide bond formation dependent. Post-translationally, polyubiquitinated, leading to proteasomal degradation. Under cellular stress, the intracellular level of cleaved form is reduced due to proteasomal degradation. In terms of processing, heavily N-glycosylated. About 30% of the protein mass is comprised of complex N-linked carbohydrate. Endoplasmic reticulum (ER) stress induces changes in glycosylation status and increases level of hypoglycosylated forms. Core carbohydrates are essential for chaperone activity. Non-secreted forms are hypoglycosylated or unglycosylated.

It is found in the secreted. Its subcellular location is the nucleus. The protein localises to the cytoplasm. The protein resides in the mitochondrion membrane. It localises to the cytosol. It is found in the microsome. Its subcellular location is the endoplasmic reticulum. The protein localises to the mitochondrion. The protein resides in the perinuclear region. It localises to the cytoplasmic vesicle. It is found in the secretory vesicle. Its subcellular location is the chromaffin granule. Functions as extracellular chaperone that prevents aggregation of non native proteins. Prevents stress-induced aggregation of blood plasma proteins. Inhibits formation of amyloid fibrils by APP, APOC2, B2M, CALCA, CSN3, SNCA and aggregation-prone LYZ variants (in vitro). Does not require ATP. Maintains partially unfolded proteins in a state appropriate for subsequent refolding by other chaperones, such as HSPA8/HSC70. Does not refold proteins by itself. Binding to cell surface receptors triggers internalization of the chaperone-client complex and subsequent lysosomal or proteasomal degradation. When secreted, protects cells against apoptosis and against cytolysis by complement: inhibits assembly of the complement membrane attack complex (MAC) by preventing polymerization of C9 pore component of the MAC complex. Intracellular forms interact with ubiquitin and SCF (SKP1-CUL1-F-box protein) E3 ubiquitin-protein ligase complexes and promote the ubiquitination and subsequent proteasomal degradation of target proteins. Promotes proteasomal degradation of COMMD1 and IKBKB. Modulates NF-kappa-B transcriptional activity. Following stress, promotes apoptosis. Inhibits apoptosis when associated with the mitochondrial membrane by interference with BAX-dependent release of cytochrome c into the cytoplasm. Plays a role in the regulation of cell proliferation. An intracellular form suppresses stress-induced apoptosis by stabilizing mitochondrial membrane integrity through interaction with HSPA5. Secreted form does not affect caspase or BAX-mediated intrinsic apoptosis and TNF-induced NF-kappa-B-activity. Secreted form act as an important modulator during neuronal differentiation through interaction with STMN3. Plays a role in the clearance of immune complexes that arise during cell injury. In Canis lupus familiaris (Dog), this protein is Clusterin (CLU).